A 741-amino-acid polypeptide reads, in one-letter code: Melanoma-associated antigen D4 (741 aa).

Polar residues predominate over residues 1–13 (MAEGSFSVQSESY). 4 disordered regions span residues 1–27 (MAEG…EVGE), 136–206 (RVAT…EGPS), 247–296 (MAFP…KALA), and 323–379 (PEGA…QPSL). Acidic residues predominate over residues 14–27 (SVEDMDEGSDEVGE). Composition is skewed to polar residues over residues 140–151 (PQVSGEDTQPTT) and 187–196 (TSAQSQTGSP). Over residues 354-363 (DEYESSEEER) the composition is skewed to acidic residues. In terms of domain architecture, MAGE spans 413-611 (LQERANKLVK…REWKAHFLEA (199 aa)). The tract at residues 700-720 (VSSGTNGGASTSVLDGPSTSS) is disordered. A compositionally biased stretch (polar residues) spans 701 to 720 (SSGTNGGASTSVLDGPSTSS).

As to quaternary structure, interacts with TRIM27. As to expression, expressed only in brain and ovary among normal tissues. Isoform 1 and isoform 2 are specifically expressed in glioma cells among cancer cells. Detected in some renal cell carcinoma samples.

Functionally, may enhance ubiquitin ligase activity of RING-type zinc finger-containing E3 ubiquitin-protein ligases. Proposed to act through recruitment and/or stabilization of the Ubl-conjugating enzyme (E2) at the E3:substrate complex. This Homo sapiens (Human) protein is Melanoma-associated antigen D4 (MAGED4).